Consider the following 764-residue polypeptide: Thyrotropin receptor (764 aa).

An N-terminal signal peptide occupies residues 1 to 21 (MSLTPLLQLALLLALPRSLRG). Residues 22-413 (KGCPSPPCEC…EFNPCEDIMG (392 aa)) are Extracellular-facing. Cysteine 31 and cysteine 41 are oxidised to a cystine. N-linked (GlcNAc...) asparagine glycosylation is found at asparagine 77 and asparagine 99. LRR repeat units follow at residues 125-150 (LPLL…VYST), 151-174 (DVFF…AFQG), 176-199 (CNET…AFNG), 201-223 (KLDA…AFGG), 225-248 (FSGP…GLEH), and 250-271 (KELI…SFLH). N-linked (GlcNAc...) asparagine glycans are attached at residues asparagine 177 and asparagine 198. Asparagine 302 carries an N-linked (GlcNAc...) asparagine glycan. A Sulfotyrosine modification is found at tyrosine 385. The helical transmembrane segment at 414–441 (YRFLRIVVWFVSLLALLGNVFVLVILLT) threads the bilayer. At 442 to 450 (SHYKLTVPR) the chain is on the cytoplasmic side. Residues 451–473 (FLMCNLAFADFCMGMYLLLIASV) traverse the membrane as a helical segment. Residues 474 to 494 (DLYTQSEYYNHAIDWQTGPGC) are Extracellular-facing. Cysteine 494 and cysteine 569 are joined by a disulfide. The helical transmembrane segment at 495 to 517 (NTAGFFTVFASELSVYTLTVITL) threads the bilayer. Residues 518-537 (ERWYAITFAMRLDRKIRLRH) are Cytoplasmic-facing. A helical membrane pass occupies residues 538–560 (AYAIMAGGWVCCFLLALLPLVGI). Topologically, residues 561-580 (SSYAKVSICLPMDTETPLAL) are extracellular. Residues 581–602 (AYIILVLLLNIVAFTIVCSCYV) form a helical membrane-spanning segment. Topologically, residues 603 to 625 (KIYITVRNPQYNPGDKDTKIAKR) are cytoplasmic. Residues 626-649 (MAVLIFTDFMCMAPISFYALSALM) form a helical membrane-spanning segment. Residues 650-660 (NKPLITVTNSK) lie on the Extracellular side of the membrane. Residues 661-682 (ILLVLFYPLNSCANPFLYAIFT) form a helical membrane-spanning segment. Residues 683 to 764 (KAFQRDVFIL…ISKEYKQPVL (82 aa)) are Cytoplasmic-facing. Residues 762 to 764 (PVL) carry the PDZ-binding motif.

This sequence belongs to the G-protein coupled receptor 1 family. FSH/LSH/TSH subfamily. In terms of assembly, interacts with heterodimer GPHA2:GPHB5; this interaction stimulates cAMP production. Interacts (via the PDZ-binding motif) with SCRIB; regulates TSHR trafficking and function. Glycosylated. Post-translationally, sulfated. Sulfation on Tyr-385 plays a role in thyrotropin receptor binding and activation. Expressed in thyroide cells (at protein level).

The protein resides in the cell membrane. Its subcellular location is the basolateral cell membrane. Its function is as follows. Receptor for the thyroid-stimulating hormone (TSH) or thyrotropin. Also acts as a receptor for the heterodimeric glycoprotein hormone (GPHA2:GPHB5) or thyrostimulin. The activity of this receptor is mediated by G proteins which activate adenylate cyclase. Plays a central role in controlling thyroid cell metabolism. The sequence is that of Thyrotropin receptor (TSHR) from Sus scrofa (Pig).